The chain runs to 316 residues: Olfactory receptor 10A7 (316 aa).

The Extracellular portion of the chain corresponds to Met1–Val25. N-linked (GlcNAc...) asparagine glycosylation is present at Asn5. Residues Ser26 to Val46 form a helical membrane-spanning segment. Topologically, residues Thr47 to Ala54 are cytoplasmic. Residues Leu55–Leu75 form a helical membrane-spanning segment. The Extracellular portion of the chain corresponds to Val76–Thr99. Residues Gln100–Tyr120 form a helical membrane-spanning segment. Topologically, residues Asp121–Ser139 are cytoplasmic. Residues Leu140–Thr160 form a helical membrane-spanning segment. The Extracellular segment spans residues Ala161–Met197. The helical transmembrane segment at Gln198–Ser217 threads the bilayer. Residues Tyr218–Ala237 are Cytoplasmic-facing. The helical transmembrane segment at Phe238–Thr258 threads the bilayer. At Tyr259 to Lys271 the chain is on the extracellular side. Residues Lys272 to Leu292 form a helical membrane-spanning segment. Residues Arg293–Phe316 are Cytoplasmic-facing.

This sequence belongs to the G-protein coupled receptor 1 family.

The protein resides in the cell membrane. Functionally, odorant receptor. The protein is Olfactory receptor 10A7 (OR10A7) of Homo sapiens (Human).